Here is a 291-residue protein sequence, read N- to C-terminus: E3 ubiquitin-protein ligase RZFP34 (291 aa).

The CHY-type zinc-finger motif lies at 20-96 (IGSGHYGCSH…VQQNCSNCGV (77 aa)). Zn(2+) contacts are provided by cysteine 27, histidine 29, cysteine 40, cysteine 41, cysteine 47, cysteine 50, histidine 51, histidine 66, cysteine 78, cysteine 81, cysteine 91, cysteine 94, cysteine 103, cysteine 106, histidine 119, cysteine 120, cysteine 123, cysteine 126, histidine 136, cysteine 137, cysteine 140, cysteine 143, histidine 152, and cysteine 154. Residues 98 to 162 (MGKYFCSKCK…QCVEGAMHHN (65 aa)) form a CTCHY-type zinc finger. The RING-type; atypical zinc finger occupies 163–206 (CPVCFEYLFDSTRDITVLRCGHTMHLECTKDMGLHNRYTCPVCS). A Phosphoserine modification is found at serine 173. Residue threonine 178 is modified to Phosphothreonine. At serine 208 the chain carries Phosphoserine. The tract at residues 271–291 (QRGSDSHSCSSGMPQVVGSTG) is disordered.

In terms of assembly, interacts with SRK2D/2SNRK2.2, SRK2I/SNRK2.3 and SRK2E/SNRK2.6. In terms of processing, phosphorylated at Ser-173, Thr-178 and Ser-208 by SRK2E/SNRK2.6 in response to abscisic acid (ABA). Phosphorylation activates its E3 ubiquitin-protein ligase activity. In terms of tissue distribution, expressed in roots, leaves, and anthers and stigma of open flowers.

It localises to the nucleus. It is found in the cytoplasm. Its subcellular location is the endoplasmic reticulum. It carries out the reaction S-ubiquitinyl-[E2 ubiquitin-conjugating enzyme]-L-cysteine + [acceptor protein]-L-lysine = [E2 ubiquitin-conjugating enzyme]-L-cysteine + N(6)-ubiquitinyl-[acceptor protein]-L-lysine.. The protein operates within protein modification; protein ubiquitination. Its function is as follows. Possesses E3 ubiquitin-protein ligase activity in vitro. Mediates mainly 'Lys-48'-linked polyubiquitination. Promotes abscisic acid (ABA)-induced stomatal closure, reactive oxygen species (ROS) production and drought tolerance. Involved in the regulation of stomatal aperture. This Arabidopsis thaliana (Mouse-ear cress) protein is E3 ubiquitin-protein ligase RZFP34.